The sequence spans 201 residues: Ras-related protein Rab-10 (201 aa).

16–23 (GDSGVGKT) provides a ligand contact to GTP. An Effector region motif is present at residues 38–46 (FISTIGIDF). GTP-binding positions include 64–68 (DTAGQ), 122–125 (NKCD), and 152–154 (SAK). Positions 175–201 (PDSTDEQSRDTVNPVQPQRQSSSGGCC) are disordered. Polar residues predominate over residues 184 to 201 (DTVNPVQPQRQSSSGGCC). 2 S-geranylgeranyl cysteine lipidation sites follow: C200 and C201.

The protein belongs to the small GTPase superfamily. Rab family. As to quaternary structure, interacts (GTP-bound form) with ehbp-1 (via C-terminal coiled coil). Interacts (GTP-bound form) with cnt-1 (via C-terminal ankyrin repeat). Interacts (GTP-bound form) with rab-5 GAP, tbc-2 (via putative coiled coil domain). Interacts (GTP-bound form) with amph-1. In terms of tissue distribution, almost ubiquitously expressed. Expressed in intestine, hypodermis, seam cells, body-wall muscles, many neurons, oviduct sheath cell, spermatheca, coelomocytes and pharyngeal and nerve ring.

The protein resides in the early endosome membrane. It is found in the late endosome membrane. It localises to the golgi apparatus membrane. Its subcellular location is the endosome membrane. The enzyme catalyses GTP + H2O = GDP + phosphate + H(+). Its activity is regulated as follows. Rab activation is generally mediated by a guanine exchange factor (GEF), while inactivation through hydrolysis of bound GTP is catalyzed by a GTPase activating protein (GAP). Tbc-4 is a likely GAP of this rab. Denn-4 is a putative GEF of this rab. The small GTPases Rab are key regulators of intracellular membrane trafficking, from the formation of transport vesicles to their fusion with membranes. Rabs cycle between an inactive GDP-bound form and an active GTP-bound form that is able to recruit to membranes different set of downstream effectors directly responsible for vesicle formation, movement, tethering and fusion. Required for basolateral endocytic recycling, the return of macromolecules and fluid from endosomes to the plasma membrane, in polarized epithelial cells of the intestine upstream of rme-1. Involved in the formation of the endosomal tubular network that is required for basolateral recycling of clathrin-independent endocytic cargo such as daf-4 in the intestine. Required for the recruitment of cnt-1 effector to endosomal membranes in the intestinal epithelium, which is important for the regulation of levels of endosomal phosphatidylinositol-4,5-bisphosphate, a key phosphoinositide in membrane traffic, and for the recruitment of endosomal membrane-bending proteins, rme-1 and sdpn-1. Recruits the rab-5 GTPase-activating protein tbc-2 to endosomes where it then inactivates rab-5 resulting in removal of rab-5 from membranes, which is necessary for cargo transport from early endosomes to recycling endosomes in the basolateral intestine. Regulates recycling of synaptic membrane AMPA glutamate receptor, glr-1, from intracellular endosomal compartments back to synapses in a cholesterol-dependent endocytosis pathway functioning after clathrin-independent endocytosis in command interneurons. Regulates neuropeptide release from dense core vesicles (DCVs) of cholinergic motoneurons in cooperation with rab-5. They reciprocally recruit each other's inactivating GAP molecule leading to local exclusion of one or the other rab protein at the Golgi-endosomal interphase at an essential stage during DCV sorting. Regulates membrane trafficking of membranes and dendrite proteins from the Golgi and/or endosomal compartments to plasma membrane during dendrite morphogenesis together with the exocyst complex in the multi-dendritic PVD sensory neurons acting in a cell-autonomous manner and requiring its GTPase activity. Functions cell-autonomously together with the exocyst complex to regulate dendrite morphogenesis and anterior-posterior patterning of the PVD neurons dendritic arbor by balancing the anterograde and retrograde transport via molecular motors unc-116 (kinesin heavy chain) and dhc-1 (dynein heavy chain) to appropriately transport branching factors, such as dma-1, to the specific subcellular regions of the developing dendrite in its GTPase activity-dependent manner. In Caenorhabditis elegans, this protein is Ras-related protein Rab-10.